Here is a 134-residue protein sequence, read N- to C-terminus: MMNVPEGFQPLFRSSPLLDLLGPFFCRQDAQRQLVVALRIDEKHCNHGGTAHGGLLSTLADVGLGYAMAFSREPPQPMVTVGLRLDFCGVARVGDWLEVHTRVDKLGQRMAFASARLHSGERLVASASGVFHLP.

Belongs to the thioesterase PaaI family.

This is Putative esterase PA0474 from Pseudomonas aeruginosa (strain ATCC 15692 / DSM 22644 / CIP 104116 / JCM 14847 / LMG 12228 / 1C / PRS 101 / PAO1).